A 705-amino-acid chain; its full sequence is Protein arginine N-methyltransferase 7 (705 aa).

SAM-dependent MTase PRMT-type domains lie at 29 to 372 and 381 to 705; these read QNSW…YSLW and TKSV…QKKL.

Belongs to the class I-like SAM-binding methyltransferase superfamily. Protein arginine N-methyltransferase family. PRMT7 subfamily.

In terms of biological role, essential arginine methyltransferase that can both catalyze the formation of omega-N monomethylarginine (MMA) and symmetrical dimethylarginine (sDMA). Specifically mediates the symmetrical dimethylation of arginine residues in the small nuclear ribonucleoproteins SmD1 and SmD3. This Drosophila simulans (Fruit fly) protein is Protein arginine N-methyltransferase 7 (Art7).